The chain runs to 172 residues: Ribosome maturation factor RimM (172 aa).

The 73-residue stretch at 99-171 folds into the PRC barrel domain; the sequence is DDIPTWNYFI…LLTVEVPDGL (73 aa).

The protein belongs to the RimM family. Binds ribosomal protein uS19.

It localises to the cytoplasm. Its function is as follows. An accessory protein needed during the final step in the assembly of 30S ribosomal subunit, possibly for assembly of the head region. Essential for efficient processing of 16S rRNA. May be needed both before and after RbfA during the maturation of 16S rRNA. It has affinity for free ribosomal 30S subunits but not for 70S ribosomes. The protein is Ribosome maturation factor RimM of Phocaeicola vulgatus (strain ATCC 8482 / DSM 1447 / JCM 5826 / CCUG 4940 / NBRC 14291 / NCTC 11154) (Bacteroides vulgatus).